The chain runs to 227 residues: Ribonuclease 3 (227 aa).

An RNase III domain is found at 4–126; it reads LDRLERKIGY…IIGAMSLDQG (123 aa). A Mg(2+)-binding site is contributed by E39. D43 is an active-site residue. 2 residues coordinate Mg(2+): D112 and E115. The active site involves E115. A DRBM domain is found at 153–226; that stretch reads DAKTRLQEYL…AEQILKELDI (74 aa).

This sequence belongs to the ribonuclease III family. Homodimer. Mg(2+) is required as a cofactor.

The protein localises to the cytoplasm. It carries out the reaction Endonucleolytic cleavage to 5'-phosphomonoester.. Its function is as follows. Digests double-stranded RNA. Involved in the processing of primary rRNA transcript to yield the immediate precursors to the large and small rRNAs (23S and 16S). Processes some mRNAs, and tRNAs when they are encoded in the rRNA operon. Processes pre-crRNA and tracrRNA of type II CRISPR loci if present in the organism. The chain is Ribonuclease 3 from Haemophilus influenzae (strain 86-028NP).